Here is a 151-residue protein sequence, read N- to C-terminus: Minor curlin subunit (151 aa).

Positions 1-21 (MKNKLLFMMLTILGAPGIATA) are cleaved as a signal peptide.

It belongs to the CsgA/CsgB family.

It localises to the fimbrium. Curlin is the structural subunit of the curli. Curli are coiled surface structures that assemble preferentially at growth temperatures below 37 degrees Celsius. Curli can bind to fibronectin. The minor subunit is the nucleation component of curlin monomers. The protein is Minor curlin subunit (csgB) of Salmonella typhi.